The primary structure comprises 410 residues: MQIYKVGGAVRDRLLGRPVTDIDWVVVGASSEEMLARGYRPVGADFPVFLHPQSGEEYALARTERKSGRGYGGFTFHASPDVTLEEDLTRRDLTINAMAEDEQGRVIDPYGGQADLEARLLRHVSPAFAEDPLRVLRVARFAARYAGLGFRVAAETLALMRQLAGSGELQALTPERSWKEISRALMEPNPEVFVQVLHDCGALAELMPEVEALFGVPQPAAHHPEIDTGVHVLSVLQQCARHHQPLTVRWACLLHDLGKGLTREADWPRHIAHETRGLPLIDAINRRFRVPRDCQELARLVGEYHTHAHRALELRPTTLLELLQSFDVYRRPQRFEEFVAASEMDARGRHGLEQRDYPQAAYLLGAAQAARAVSVKPLVEKGLKGAELGEALKRARLAALKAYKEERGKA.

Positions 8 and 11 each coordinate ATP. Gly8 and Arg11 together coordinate CTP. The Mg(2+) site is built by Asp21 and Asp23. Residues Arg91, Arg137, and Arg140 each contribute to the ATP site. CTP contacts are provided by Arg91, Arg137, and Arg140. One can recognise an HD domain in the interval 228 to 329 (TGVHVLSVLQ…LELLQSFDVY (102 aa)).

This sequence belongs to the tRNA nucleotidyltransferase/poly(A) polymerase family. Bacterial CCA-adding enzyme type 1 subfamily. Monomer. Can also form homodimers and oligomers. Requires Mg(2+) as cofactor. Ni(2+) serves as cofactor.

The enzyme catalyses a tRNA precursor + 2 CTP + ATP = a tRNA with a 3' CCA end + 3 diphosphate. The catalysed reaction is a tRNA with a 3' CCA end + 2 CTP + ATP = a tRNA with a 3' CCACCA end + 3 diphosphate. Functionally, catalyzes the addition and repair of the essential 3'-terminal CCA sequence in tRNAs without using a nucleic acid template. Adds these three nucleotides in the order of C, C, and A to the tRNA nucleotide-73, using CTP and ATP as substrates and producing inorganic pyrophosphate. tRNA 3'-terminal CCA addition is required both for tRNA processing and repair. Also involved in tRNA surveillance by mediating tandem CCA addition to generate a CCACCA at the 3' terminus of unstable tRNAs. While stable tRNAs receive only 3'-terminal CCA, unstable tRNAs are marked with CCACCA and rapidly degraded. The protein is Multifunctional CCA protein of Pseudomonas paraeruginosa (strain DSM 24068 / PA7) (Pseudomonas aeruginosa (strain PA7)).